The following is a 285-amino-acid chain: MPRYAQLVMGPAGSGKSTYCATMLEHCQALNRSVQVVNLDPAAEHFEYPVIADIRELIQVDDVMEDDSLRFGPNGGLIFCMEYFSNNFDWLEESLGHVEDDYILFDCPGQIELYTHLPVMKQLVEQLQQWEFRVCGVFLVDSQFMVETFKFISGVMAALSAMVMLEIPQVNIMTKMDLLSPKAKKEIEKYLDPDMYSMMEDNSVALRSKKFSKLTKAICGLIDDYSMVRFLPFDRTDEEGINIVLQHIDFSIQYGEDLEVKEPKEVDEEPSNSNFDAFFQDTADS.

Residue 13 to 18 participates in GTP binding; it reads GSGKST. Positions 72–74 match the Gly-Pro-Asn (GPN)-loop; involved in dimer interface motif; sequence GPN. Residue 174–177 coordinates GTP; it reads TKMD. Residues 262-285 form a disordered region; that stretch reads EPKEVDEEPSNSNFDAFFQDTADS.

Belongs to the GPN-loop GTPase family. In terms of assembly, heterodimer with gpn1. Binds to RNA polymerase II (RNAPII).

Functionally, small GTPase required for proper localization of RNA polymerase II (RNAPII). May act at an RNAP assembly step prior to nuclear import. The sequence is that of GPN-loop GTPase 3 from Danio rerio (Zebrafish).